Reading from the N-terminus, the 444-residue chain is EMI domain-containing protein 1 (444 aa).

The first 22 residues, 1 to 22 (MGGPRAWTLLCLGLLLPGGGAA), serve as a signal peptide directing secretion. One can recognise an EMI domain in the interval 33 to 106 (RRNWCSYVVT…PGHSGVTCEE (74 aa)). 3 cysteine pairs are disulfide-bonded: cysteine 37/cysteine 96, cysteine 62/cysteine 68, and cysteine 95/cysteine 104. The O-linked (Fuc) threonine glycan is linked to threonine 42. Residue asparagine 51 is glycosylated (N-linked (GlcNAc...) asparagine). Asparagine 136 is a glycosylation site (N-linked (GlcNAc...) asparagine). Disordered stretches follow at residues 161–374 (EQTV…KSHW) and 404–444 (PDLG…SERS). The Collagen-like domain occupies 221–371 (GPPGPQGPPG…PGPKGDPGEK (151 aa)). Pro residues predominate over residues 222 to 231 (PPGPQGPPGR). A compositionally biased stretch (low complexity) spans 232 to 243 (PGQTGAAGTPGK). Pro residues-rich tracts occupy residues 244–264 (MGPP…PVGP) and 292–311 (PTGP…PGLP).

As to quaternary structure, homo- or heteromers. In terms of processing, O-fucosylated at Thr-42 within the EMI domain by FUT10/POFUT3 and FUT11/POFUT4.

The protein localises to the secreted. It is found in the extracellular space. The protein resides in the extracellular matrix. The chain is EMI domain-containing protein 1 (Emid1) from Mus musculus (Mouse).